The sequence spans 83 residues: Large ribosomal subunit protein eL14 (83 aa).

The protein belongs to the eukaryotic ribosomal protein eL14 family. Part of the 50S ribosomal subunit.

The chain is Large ribosomal subunit protein eL14 from Thermococcus kodakarensis (strain ATCC BAA-918 / JCM 12380 / KOD1) (Pyrococcus kodakaraensis (strain KOD1)).